The chain runs to 96 residues: Protein RnfH (96 aa).

Belongs to the UPF0125 (RnfH) family.

The protein is Protein RnfH of Escherichia coli O81 (strain ED1a).